We begin with the raw amino-acid sequence, 112 residues long: UstYa family oxidase VicYb (112 aa).

2 consecutive short sequence motifs (HXXHC) follow at residues 9 to 13 (HYLHC) and 36 to 40 (HLDHC).

This sequence belongs to the ustYa family.

Its pathway is mycotoxin biosynthesis. Its function is as follows. UstYa family oxidase, part of the gene cluster that mediates the biosynthesis of the secondary metabolite victorin, the molecular basis for Victoria blight of oats. Within the pathway, vicYb catalyzes the oxidative cyclization of the core peptide. The pathway starts with the processing of the precursor vicA1 by several endopeptidases including kexin proteases as well as the cluster-specific S28 family peptidases vicPa and vicPb to produce 7 identical copies of the hexapeptide Gly-Leu-Lys-Leu-Ala-Phe. After being excised from the precursor peptide, the core peptides are cyclized and modified post-translationally by enzymes encoded within the gene cluster. The ustYa family oxidase vicYb is required for the formation of the macrocycle in victorin and the copper amine oxidases (CAOs) vicK1 and vicK2 are responsible for converting victorin to the active form by oxidizing the N-terminal glycyl residue in the peptides to glyoxylate. Relaxed substrate specificity of enzymes in the victorin biosynthetic pathway results in a metabolic grid that produces a set of analogs including victorinines B, C, E or HV-toxin M. The chain is UstYa family oxidase VicYb from Bipolaris victoriae (strain FI3) (Victoria blight of oats agent).